The following is a 645-amino-acid chain: Phosphomethylpyrimidine synthase (645 aa).

Residues 1-12 (MSHNTVIPTTDI) show a composition bias toward polar residues. Residues 1 to 25 (MSHNTVIPTTDISPKPDPARPRKAQ) are disordered. Residues Asn-253, Met-282, Tyr-311, His-347, 367 to 369 (SRG), 408 to 411 (DGLR), and Glu-447 each bind substrate. A Zn(2+)-binding site is contributed by His-451. A substrate-binding site is contributed by Tyr-474. His-515 serves as a coordination point for Zn(2+). [4Fe-4S] cluster contacts are provided by Cys-595, Cys-598, and Cys-603.

It belongs to the ThiC family. In terms of assembly, homodimer. It depends on [4Fe-4S] cluster as a cofactor.

The enzyme catalyses 5-amino-1-(5-phospho-beta-D-ribosyl)imidazole + S-adenosyl-L-methionine = 4-amino-2-methyl-5-(phosphooxymethyl)pyrimidine + CO + 5'-deoxyadenosine + formate + L-methionine + 3 H(+). It participates in cofactor biosynthesis; thiamine diphosphate biosynthesis. Catalyzes the synthesis of the hydroxymethylpyrimidine phosphate (HMP-P) moiety of thiamine from aminoimidazole ribotide (AIR) in a radical S-adenosyl-L-methionine (SAM)-dependent reaction. This is Phosphomethylpyrimidine synthase from Photorhabdus laumondii subsp. laumondii (strain DSM 15139 / CIP 105565 / TT01) (Photorhabdus luminescens subsp. laumondii).